Here is a 247-residue protein sequence, read N- to C-terminus: Opacity protein opA52 (247 aa).

A signal peptide is located at residue Ala1.

The protein belongs to the opacity porin family.

Its subcellular location is the cell outer membrane. Implicated in a number of adherence functions. OPA proteins are implicated in pathogenesis and are subject to phase variation. The protein is Opacity protein opA52 (opaG) of Neisseria gonorrhoeae.